Here is a 342-residue protein sequence, read N- to C-terminus: MKHFEFENDKLIVLDQRKLPFEKEYFVCSTYQDVYIAIKDMIIRGAPLIGIVAAYGVVLGFKEIIEKNMDSAKIYEILNYLANSRPTAVNLFWALERMKKVFEEARNLSKSQIYSLLMQEAKKIEDEDKSINKKIGEHGNTLIKEGANILTHCNAGALATGGYGTALGVIREAFFAGKNIHVYVDETRPYLQGARLTAFELSEDGIPNTVICDNMAGYLMKLGKIDCVIVGADRIALNGDTANKIGTYSLSVLAKHHGIPFYISAPISTIDFNIKSGSEIPIEERSEDEIRFFNGKKIVPDESKVFNPAFDVTPAENITAIITEKGVVFPPFEENISKLKEK.

Substrate is bound by residues 44 to 46 (RGA), Arg85, and Gln192. Asp233 functions as the Proton donor in the catalytic mechanism. 243–244 (NK) contributes to the substrate binding site.

This sequence belongs to the eIF-2B alpha/beta/delta subunits family. MtnA subfamily.

It carries out the reaction 5-(methylsulfanyl)-alpha-D-ribose 1-phosphate = 5-(methylsulfanyl)-D-ribulose 1-phosphate. It functions in the pathway amino-acid biosynthesis; L-methionine biosynthesis via salvage pathway; L-methionine from S-methyl-5-thio-alpha-D-ribose 1-phosphate: step 1/6. Its function is as follows. Catalyzes the interconversion of methylthioribose-1-phosphate (MTR-1-P) into methylthioribulose-1-phosphate (MTRu-1-P). In Caldicellulosiruptor saccharolyticus (strain ATCC 43494 / DSM 8903 / Tp8T 6331), this protein is Methylthioribose-1-phosphate isomerase.